The following is a 226-amino-acid chain: MKKAVILISGGLDSTTCLAVAKSKGFACYALSFDYGQKHHSELVAAEKIAAHFNVVRYEVVTLSIGKLGGSALTDNSLDVPDYGGNESIPITYVPARNTIFLSIALGWAEILDAESILIGASAIDYSGYPDCRPEYIAAFQNLANLATKRGIEGHSIKIEAPLIHLSKAETIKLGYSLGVDYSMTVSCYRANEEGLACGYCDSCELRKKGFKEAEIKDPTQYITKV.

Residue 8–18 (ISGGLDSTTCL) coordinates ATP. Residues Cys188, Cys198, Cys201, and Cys204 each contribute to the Zn(2+) site.

This sequence belongs to the QueC family. Zn(2+) is required as a cofactor.

The catalysed reaction is 7-carboxy-7-deazaguanine + NH4(+) + ATP = 7-cyano-7-deazaguanine + ADP + phosphate + H2O + H(+). It participates in purine metabolism; 7-cyano-7-deazaguanine biosynthesis. Catalyzes the ATP-dependent conversion of 7-carboxy-7-deazaguanine (CDG) to 7-cyano-7-deazaguanine (preQ(0)). This chain is 7-cyano-7-deazaguanine synthase, found in Coxiella burnetii (strain Dugway 5J108-111).